We begin with the raw amino-acid sequence, 1551 residues long: Envelopment polyprotein (1551 aa).

The signal sequence occupies residues 1–17 (MSKRVLIIAVVVYLVFT). Residues 18 to 546 (TQNQITGNHT…CRMSSRPTVA (529 aa)) lie on the Lumenal side of the membrane. Residues 24-66 (GNHTTINSSSPSTTEASSTPTVSRTPQTTTTSTAVSTTITATT) are disordered. N-linked (GlcNAc...) asparagine; by host glycans are attached at residues asparagine 25 and asparagine 30. Over residues 31–66 (SSSPSTTEASSTPTVSRTPQTTTTSTAVSTTITATT) the composition is skewed to low complexity. Residues asparagine 80, asparagine 142, and asparagine 413 are each glycosylated (N-linked (GlcNAc...) asparagine; by host). The chain crosses the membrane as a helical span at residues 547 to 567 (LLLGIWIGCGYILTCIFSFLL). Residues 568–675 (YHLILFFANC…ISVGIFLKRT (108 aa)) are Cytoplasmic-facing. The chain crosses the membrane as a helical span at residues 676–696 (TWLVVLLVLLGLAISPVQGAP). The Lumenal segment spans residues 697–704 (TEVSNVKQ). A helical transmembrane segment spans residues 705–725 (DGDYSICYFIFGCLVTAALLL). Residues 726-823 (KVKRTNSNGI…REKLFTTGLQ (98 aa)) are Cytoplasmic-facing. Residues 824 to 844 (LFINKTNVVVFALIMCFLLLL) traverse the membrane as a helical segment. Over 845 to 1451 (TGHNASAFDS…GDFFKHYIGS (607 aa)) the chain is Lumenal. N-linked (GlcNAc...) asparagine; by host glycosylation is found at asparagine 848, asparagine 1201, asparagine 1258, and asparagine 1420. The cysteines at positions 1023 and 1216 are disulfide-linked. Residues 1452-1472 (IAVGVLGTVLPFALLILFFIY) form a helical membrane-spanning segment. The Cytoplasmic segment spans residues 1473–1551 (GDKMLWPFKV…KKEKKLSEIA (79 aa)).

The protein belongs to the nairovirus envelope glycoprotein family. Heterodimer with glycoprotein C; in prefusion state. In terms of assembly, heterodimer with glycoprotein N; in prefusion state. Homotrimeric; in postfusion state. Post-translationally, specific enzymatic cleavage by host MBTPS1/S1P/SKI-1 endopeptidase yield glycoprotein N. Specific enzymatic cleavages by host furin-like protease and MBTPS1/S1P endopeptidase yield GP38. Glycosylated.

It is found in the host endoplasmic reticulum membrane. It localises to the virion membrane. The protein resides in the host Golgi apparatus membrane. Glycoprotein N and glycoprotein C interact with each other and are present at the surface of the virion. Glycoprotein N probably locks the Gn-Gc complex in a prefusion state. Glycoprotein N and glycoprotein C are able to attach the virion to host cell receptors. This attachment induces virion internalization predominantly through clathrin-dependent endocytosis. Its function is as follows. Glycoprotein C and glycoprotein N interact with each other and are present at the surface of the virion. The spikes at the surface of the virion are formed by an N-terminal extension of glycoprotein C. Glycoprotein N and glycoprotein C are able to attach the virion to host cell receptors. This attachment induces virion internalization predominantly through clathrin-dependent endocytosis. Class II fusion protein that promotes fusion of viral membrane with host endosomal membrane after endocytosis of the virion. Exposure to potassium is necessary for the conformational change leading to fusion. This Amblyomma variegatum (Tropical bont tick) protein is Envelopment polyprotein (GP).